Consider the following 124-residue polypeptide: Putative membrane protein insertion efficiency factor (124 aa).

The protein belongs to the UPF0161 family.

Its subcellular location is the cell inner membrane. Its function is as follows. Could be involved in insertion of integral membrane proteins into the membrane. In Psychrobacter arcticus (strain DSM 17307 / VKM B-2377 / 273-4), this protein is Putative membrane protein insertion efficiency factor.